The following is a 1067-amino-acid chain: Receptor-type guanylate cyclase gcy-10 (1067 aa).

An N-terminal signal peptide occupies residues 1–20 (MLKSLLIIVIVFLHRELCDG). The Extracellular portion of the chain corresponds to 21–438 (IQLILFDNWP…CVAKSSCVNY (418 aa)). N-linked (GlcNAc...) asparagine glycosylation is present at Asn411. Residues 439 to 459 (IPHIIAAVVIVTIIVIAIVII) form a helical membrane-spanning segment. Residues 460–1067 (VKQRRHKLNI…RGSIVPLQKA (608 aa)) are Cytoplasmic-facing. The Protein kinase domain occupies 509–791 (ALTSRRRVFG…ESISTVYPLS (283 aa)). ATP is bound by residues 515–523 (RVFGSYALV) and Lys534. A Guanylate cyclase domain is found at 859–989 (TVMFVQICDF…DTVNFASRMQ (131 aa)).

It belongs to the adenylyl cyclase class-4/guanylyl cyclase family. As to expression, expressed predominantly in AWC but also in AWB, ASI, ASJ and ASK sensory neurons and in I1 interneuron.

The protein localises to the cell membrane. The protein resides in the cell projection. It localises to the cilium. It carries out the reaction GTP = 3',5'-cyclic GMP + diphosphate. Guanylate cyclase involved in the production of the second messenger cGMP. Regulates chemotaxis responses toward volatile odorants in AWC sensory neurons and their avoidance in AWB sensory neurons. May be involved in sensitivity to quinine by regulating egl-4 activity through the production of cGMP. Involved in phototransduction in ASJ neurons downstream of G protein coupled-photoreceptor lite-1. Required to maintain the expression of putative olfactory receptor str-2 in AWC neurons in adults. In AWB and AWC sensory neurons, mediates the recognition of food oders which subsequently allows for the detection of preferred food sources. Involved in AWB sensory neuron development and extension during postembryonic development, potentially via mediating localization of tub-1 and PI(4,5)P2 to membrane cilia. The chain is Receptor-type guanylate cyclase gcy-10 from Caenorhabditis elegans.